Here is a 156-residue protein sequence, read N- to C-terminus: ATP synthase subunit b (156 aa).

A helical transmembrane segment spans residues 5–25 (VTLIGQTVAFIIFVWFCMKFV).

Belongs to the ATPase B chain family. As to quaternary structure, F-type ATPases have 2 components, F(1) - the catalytic core - and F(0) - the membrane proton channel. F(1) has five subunits: alpha(3), beta(3), gamma(1), delta(1), epsilon(1). F(0) has three main subunits: a(1), b(2) and c(10-14). The alpha and beta chains form an alternating ring which encloses part of the gamma chain. F(1) is attached to F(0) by a central stalk formed by the gamma and epsilon chains, while a peripheral stalk is formed by the delta and b chains.

The protein localises to the cell inner membrane. F(1)F(0) ATP synthase produces ATP from ADP in the presence of a proton or sodium gradient. F-type ATPases consist of two structural domains, F(1) containing the extramembraneous catalytic core and F(0) containing the membrane proton channel, linked together by a central stalk and a peripheral stalk. During catalysis, ATP synthesis in the catalytic domain of F(1) is coupled via a rotary mechanism of the central stalk subunits to proton translocation. Functionally, component of the F(0) channel, it forms part of the peripheral stalk, linking F(1) to F(0). This chain is ATP synthase subunit b, found in Shewanella loihica (strain ATCC BAA-1088 / PV-4).